The chain runs to 201 residues: Orotate phosphoribosyltransferase (201 aa).

113–121 (EDIITTGKS) contributes to the 5-phospho-alpha-D-ribose 1-diphosphate binding site. Residues threonine 117 and arginine 145 each contribute to the orotate site.

The protein belongs to the purine/pyrimidine phosphoribosyltransferase family. PyrE subfamily. As to quaternary structure, homodimer. Requires Mg(2+) as cofactor.

It carries out the reaction orotidine 5'-phosphate + diphosphate = orotate + 5-phospho-alpha-D-ribose 1-diphosphate. It participates in pyrimidine metabolism; UMP biosynthesis via de novo pathway; UMP from orotate: step 1/2. Catalyzes the transfer of a ribosyl phosphate group from 5-phosphoribose 1-diphosphate to orotate, leading to the formation of orotidine monophosphate (OMP). The sequence is that of Orotate phosphoribosyltransferase from Helicobacter pylori (strain Shi470).